Consider the following 721-residue polypeptide: Quinolinate synthase, chloroplastic (721 aa).

Residues 1 to 67 constitute a chloroplast transit peptide; that stretch reads MDAANLVMKS…KIPSNNSTFT (67 aa). The active-site Cysteine persulfide intermediate is Cys-133. His-283 and Ser-309 together coordinate iminosuccinate. Residue Cys-363 coordinates [4Fe-4S] cluster. Iminosuccinate-binding positions include 392–394 and Ser-414; that span reads YIN. Cys-487 is a binding site for [4Fe-4S] cluster. Residues 513–515 and Thr-538 contribute to the iminosuccinate site; that span reads HFE. Cys-643 provides a ligand contact to [4Fe-4S] cluster.

This sequence belongs to the quinolinate synthase family. Type 1 subfamily. In terms of assembly, homodimer. Requires [4Fe-4S] cluster as cofactor.

The protein localises to the plastid. It is found in the chloroplast. The enzyme catalyses iminosuccinate + dihydroxyacetone phosphate = quinolinate + phosphate + 2 H2O + H(+). Its pathway is alkaloid biosynthesis; nicotine biosynthesis. It participates in cofactor biosynthesis; NAD(+) biosynthesis; quinolinate from iminoaspartate: step 1/1. In terms of biological role, involved in the biosynthesis of pyridine alkaloid natural products, leading mainly to the production of anabasine, anatabine, nicotine and nornicotine, effective deterrents against herbivores with antiparasitic and pesticide properties (neurotoxins); nornicotine serves as the precursor in the synthesis of the carcinogen compound N'-nitrosonornicotine (NNN). Catalyzes the condensation of iminoaspartate with dihydroxyacetone phosphate to form quinolinate. This chain is Quinolinate synthase, chloroplastic, found in Nicotiana tabacum (Common tobacco).